Reading from the N-terminus, the 512-residue chain is Dihydroniloticin synthase CYP71CD2 (512 aa).

The helical transmembrane segment at 1-21 (MNLQLDYFSITSFLVFLVVLF) threads the bilayer. A heme-binding site is contributed by N436.

Belongs to the cytochrome P450 family. Requires heme as cofactor. In terms of tissue distribution, mainly expressed in petioles and roots, and, to a lower extent, in leaves.

Its subcellular location is the membrane. It catalyses the reaction tirucalla-7,24-dien-3beta-ol + 2 reduced [NADPH--hemoprotein reductase] + 2 O2 = dihydroniloticin + 2 oxidized [NADPH--hemoprotein reductase] + 2 H2O + 2 H(+). It participates in secondary metabolite biosynthesis; terpenoid biosynthesis. Its function is as follows. Monooxygenase involved in the biosynthesis of limonoids triterpene natural products such as azadirachtin, an antifeedant widely used as bioinsecticide, and possessing many medicinal applications including anti-tumoral, anti-malarial, anti-rheumatic, antibacterial, anti-inflammatory, anti-pyretic and diuretic effects. Catalyzes the conversion of tirucalladienol to dihydroniloticin. The chain is Dihydroniloticin synthase CYP71CD2 from Melia azedarach (Chinaberry tree).